Reading from the N-terminus, the 387-residue chain is Erythronate-4-phosphate dehydrogenase (387 aa).

S45 and T67 together coordinate substrate. D147 is an NAD(+) binding site. The active site involves R208. D232 lines the NAD(+) pocket. Residue E237 is part of the active site. H254 (proton donor) is an active-site residue. G257 provides a ligand contact to NAD(+). Y258 contributes to the substrate binding site.

This sequence belongs to the D-isomer specific 2-hydroxyacid dehydrogenase family. PdxB subfamily. Homodimer.

Its subcellular location is the cytoplasm. The catalysed reaction is 4-phospho-D-erythronate + NAD(+) = (R)-3-hydroxy-2-oxo-4-phosphooxybutanoate + NADH + H(+). The protein operates within cofactor biosynthesis; pyridoxine 5'-phosphate biosynthesis; pyridoxine 5'-phosphate from D-erythrose 4-phosphate: step 2/5. Its function is as follows. Catalyzes the oxidation of erythronate-4-phosphate to 3-hydroxy-2-oxo-4-phosphonooxybutanoate. The protein is Erythronate-4-phosphate dehydrogenase of Shewanella sediminis (strain HAW-EB3).